The sequence spans 597 residues: Glutamine--fructose-6-phosphate aminotransferase [isomerizing] (597 aa).

The active-site Nucleophile; for GATase activity is the Cys2. Residues 2–218 (CGIVGYIGDS…ENSVGQISLE (217 aa)) enclose the Glutamine amidotransferase type-2 domain. SIS domains follow at residues 276–416 (IDPE…QLGT) and 449–587 (LSKR…VDHP). Residue Lys592 is the For Fru-6P isomerization activity of the active site.

As to quaternary structure, homodimer.

Its subcellular location is the cytoplasm. It carries out the reaction D-fructose 6-phosphate + L-glutamine = D-glucosamine 6-phosphate + L-glutamate. Functionally, catalyzes the first step in hexosamine metabolism, converting fructose-6P into glucosamine-6P using glutamine as a nitrogen source. In Helicobacter pylori (strain J99 / ATCC 700824) (Campylobacter pylori J99), this protein is Glutamine--fructose-6-phosphate aminotransferase [isomerizing].